The chain runs to 82 residues: Turripeptide Gsp9.1 (82 aa).

The signal sequence occupies residues 1–23 (MMAKLMITVMMVLLLSLQQGADG). The propeptide occupies 24-46 (RSKRWRKNQMAASSIMRNLITAR). Residues Pro-49 and Pro-50 each carry the 4-hydroxyproline modification. Cystine bridges form between Cys-53/Cys-68, Cys-58/Cys-72, and Cys-64/Cys-79. 2 positions are modified to 4-carboxyglutamate: Glu-60 and Glu-63.

It belongs to the Pg turripeptide superfamily. As to expression, expressed by the venom duct.

The protein resides in the secreted. This chain is Turripeptide Gsp9.1, found in Gemmula speciosa (Splendid gem-turris).